The following is a 206-amino-acid chain: MIASLRGTVINIGLSSAVIECNGVGYEVVTTPNTLSQLVRGEEALVLTTMVVREDAMKLYGFIDNESREMFSVLQTVSGLGPRLALACESVLSPLEISQAITNADAKTLQRVPGVGKRMADRLIVELKGKVAAFAAGVVDEGGEQISLPNANIASEVVVEQVSQALVGLGFSEKQSDDAVSFVLAADPSLDTSGALRAALAKLSGK.

The segment at 1 to 63 is domain I; that stretch reads MIASLRGTVI…EDAMKLYGFI (63 aa). The domain II stretch occupies residues 64 to 142; that stretch reads DNESREMFSV…AFAAGVVDEG (79 aa). The interval 143–153 is flexible linker; it reads GEQISLPNANI. Positions 154–206 are domain III; sequence ASEVVVEQVSQALVGLGFSEKQSDDAVSFVLAADPSLDTSGALRAALAKLSGK.

The protein belongs to the RuvA family. Homotetramer. Forms an RuvA(8)-RuvB(12)-Holliday junction (HJ) complex. HJ DNA is sandwiched between 2 RuvA tetramers; dsDNA enters through RuvA and exits via RuvB. An RuvB hexamer assembles on each DNA strand where it exits the tetramer. Each RuvB hexamer is contacted by two RuvA subunits (via domain III) on 2 adjacent RuvB subunits; this complex drives branch migration. In the full resolvosome a probable DNA-RuvA(4)-RuvB(12)-RuvC(2) complex forms which resolves the HJ.

The protein resides in the cytoplasm. Functionally, the RuvA-RuvB-RuvC complex processes Holliday junction (HJ) DNA during genetic recombination and DNA repair, while the RuvA-RuvB complex plays an important role in the rescue of blocked DNA replication forks via replication fork reversal (RFR). RuvA specifically binds to HJ cruciform DNA, conferring on it an open structure. The RuvB hexamer acts as an ATP-dependent pump, pulling dsDNA into and through the RuvAB complex. HJ branch migration allows RuvC to scan DNA until it finds its consensus sequence, where it cleaves and resolves the cruciform DNA. The polypeptide is Holliday junction branch migration complex subunit RuvA (Corynebacterium glutamicum (strain ATCC 13032 / DSM 20300 / JCM 1318 / BCRC 11384 / CCUG 27702 / LMG 3730 / NBRC 12168 / NCIMB 10025 / NRRL B-2784 / 534)).